A 217-amino-acid polypeptide reads, in one-letter code: Small ribosomal subunit protein uS3 (217 aa).

Residues 38-106 (IRNFIKKELA…QVHINIIEIK (69 aa)) enclose the KH type-2 domain.

This sequence belongs to the universal ribosomal protein uS3 family. In terms of assembly, part of the 30S ribosomal subunit. Forms a tight complex with proteins S10 and S14.

Its function is as follows. Binds the lower part of the 30S subunit head. Binds mRNA in the 70S ribosome, positioning it for translation. This is Small ribosomal subunit protein uS3 from Streptococcus suis (strain 98HAH33).